A 201-amino-acid chain; its full sequence is Putative manganese efflux pump MntP 2 (201 aa).

6 helical membrane-spanning segments follow: residues 3 to 23, 39 to 59, 65 to 85, 116 to 136, 141 to 161, and 176 to 196; these read LISVILISIGLSMDAFAVSIT, IGLFFGGFQALMPLIGWSIGI, IAALDHWIALILLSIIGGKMI, LILLAIATSIDALAVGVSFAF, IINTIIIIGSITFVICFIGVM, and ILGGVVLILIGVKIFIQHTNI.

This sequence belongs to the MntP (TC 9.B.29) family.

It localises to the cell membrane. Functionally, probably functions as a manganese efflux pump. This is Putative manganese efflux pump MntP 2 from Clostridium botulinum (strain Hall / ATCC 3502 / NCTC 13319 / Type A).